A 328-amino-acid polypeptide reads, in one-letter code: tRNA(Ile)-lysidine synthase (328 aa).

Position 35 to 40 (35 to 40 (SGGADS)) interacts with ATP.

Belongs to the tRNA(Ile)-lysidine synthase family.

Its subcellular location is the cytoplasm. It carries out the reaction cytidine(34) in tRNA(Ile2) + L-lysine + ATP = lysidine(34) in tRNA(Ile2) + AMP + diphosphate + H(+). Its function is as follows. Ligates lysine onto the cytidine present at position 34 of the AUA codon-specific tRNA(Ile) that contains the anticodon CAU, in an ATP-dependent manner. Cytidine is converted to lysidine, thus changing the amino acid specificity of the tRNA from methionine to isoleucine. This chain is tRNA(Ile)-lysidine synthase, found in Polaromonas naphthalenivorans (strain CJ2).